Here is a 471-residue protein sequence, read N- to C-terminus: Ribulose bisphosphate carboxylase large chain (471 aa).

Lys5 is modified (N6,N6,N6-trimethyllysine). Asn114 and Thr164 together coordinate substrate. Catalysis depends on Lys166, which acts as the Proton acceptor. A substrate-binding site is contributed by Lys168. Positions 192, 194, and 195 each coordinate Mg(2+). An N6-carboxylysine modification is found at Lys192. Residue His285 is the Proton acceptor of the active site. Arg286, His318, and Ser370 together coordinate substrate.

It belongs to the RuBisCO large chain family. Type I subfamily. Heterohexadecamer of 8 large chains and 8 small chains; disulfide-linked. The disulfide link is formed within the large subunit homodimers. Requires Mg(2+) as cofactor. The disulfide bond which can form in the large chain dimeric partners within the hexadecamer appears to be associated with oxidative stress and protein turnover.

The protein resides in the plastid. The protein localises to the chloroplast. It carries out the reaction 2 (2R)-3-phosphoglycerate + 2 H(+) = D-ribulose 1,5-bisphosphate + CO2 + H2O. It catalyses the reaction D-ribulose 1,5-bisphosphate + O2 = 2-phosphoglycolate + (2R)-3-phosphoglycerate + 2 H(+). Functionally, ruBisCO catalyzes two reactions: the carboxylation of D-ribulose 1,5-bisphosphate, the primary event in carbon dioxide fixation, as well as the oxidative fragmentation of the pentose substrate in the photorespiration process. Both reactions occur simultaneously and in competition at the same active site. The sequence is that of Ribulose bisphosphate carboxylase large chain from Schlumbergera truncata (Thanksgiving cactus).